The chain runs to 1285 residues: Protein cramped-like (1285 aa).

The disordered stretch occupies residues 1-161 (MTVKLGDAGS…EGKKVRRQWE (161 aa)). The segment covering 13–24 (EGLKKLGKRTAD) has biased composition (basic and acidic residues). Pro residues predominate over residues 57 to 71 (PAPPRGLPTPSPPQG). A compositionally biased stretch (gly residues) spans 100-116 (GSGGASGSGPRGKGSDG). 2 stretches are compositionally biased toward low complexity: residues 117-126 (GASSSGNVSG) and 134-147 (GGSR…GSSG). Residues 148–161 (PEKEEGKKVRRQWE) are compositionally biased toward basic and acidic residues. The SANT domain occupies 158–221 (RQWESWSTED…FYYRTWHKIT (64 aa)). Ser-304 is subject to Phosphoserine. 6 disordered regions span residues 456–519 (GQLK…GPHL), 579–673 (RADT…VPAS), 766–843 (NTAS…SDSD), 994–1055 (SSGI…SPAL), 1068–1107 (GLSI…LSQG), and 1132–1172 (PLSP…YPSD). A compositionally biased stretch (low complexity) spans 479–503 (ASQSSGESSPESAPAEGAAPSLSSP). 2 stretches are compositionally biased toward basic and acidic residues: residues 505-519 (APDR…GPHL) and 579-589 (RADTRSGREHP). Composition is skewed to polar residues over residues 654-664 (EHLSSQGQPAT) and 766-784 (NTAS…STTP). The segment covering 792 to 803 (NSRSPRCSRNPS) has biased composition (low complexity). Residues 804-813 (TLRSNKTFPS) show a composition bias toward polar residues. A compositionally biased stretch (low complexity) spans 833 to 843 (GPSSTGSSDSD). Positions 994 to 1012 (SSGISPLSSEQATTAISGQ) are enriched in polar residues. Low complexity-rich tracts occupy residues 1069–1086 (LSIP…LSPP) and 1141–1156 (SDSS…SPQP). Ser-1284 carries the phosphoserine modification.

This sequence belongs to the cramped family.

The protein localises to the nucleus. In Mus musculus (Mouse), this protein is Protein cramped-like.